Consider the following 296-residue polypeptide: MTPETNNDETLSRPKPRAALPPVPEGMSKSQWKKQWKKEQFELNKPLYAKIRKEKKQKAREQRRERLQKALEENGGEIPEELRRTPRVNVNQKDSGIKVIIDCAFDELMNEKEIVSLSTQITRAYSANKRENHFADVKVTSFNKRLKERFDCGLKGANYDAWKHFEFTDESALPTTNAVYLTADTDETLETLEPGTTYIVGGIVDKNRHKALCYNKAKELGIPTRRLPIGEYIKLCGRKVLTTTHVIQIMLRYFDNHDWKEAFESVLPARKLAELADHAQESNSSSPAEEQDAQDI.

The interval 1–33 (MTPETNNDETLSRPKPRAALPPVPEGMSKSQWK) is disordered. An SAM-dependent MTase TRM10-type domain is found at 85–274 (TPRVNVNQKD…SVLPARKLAE (190 aa)). S-adenosyl-L-methionine-binding positions include 181–182 (LT), glycine 201, 205–209 (DKNRH), cysteine 213, leucine 227, and 239–241 (KVL). Aspartate 205 serves as the catalytic Proton acceptor. Residues 277-296 (DHAQESNSSSPAEEQDAQDI) are disordered.

This sequence belongs to the class IV-like SAM-binding methyltransferase superfamily. TRM10 family. Monomer.

It localises to the cytoplasm. The protein localises to the nucleus. The catalysed reaction is guanosine(9) in tRNA + S-adenosyl-L-methionine = N(1)-methylguanosine(9) in tRNA + S-adenosyl-L-homocysteine + H(+). S-adenosyl-L-methionine-dependent guanine N(1)-methyltransferase that catalyzes the formation of N(1)-methylguanine at position 9 (m1G9) in cytoplasmic tRNA. This is tRNA (guanine(9)-N1)-methyltransferase from Eremothecium gossypii (strain ATCC 10895 / CBS 109.51 / FGSC 9923 / NRRL Y-1056) (Yeast).